Reading from the N-terminus, the 229-residue chain is Cytochrome c oxidase subunit 2 (229 aa).

The Mitochondrial intermembrane segment spans residues 1–14 (MAQQAQLGLQDAAS). Residues 15-45 (PIMEELIHFHDHTLTVVFLISVLIFYLIIVM) traverse the membrane as a helical segment. The Mitochondrial matrix portion of the chain corresponds to 46–59 (VTTTFMNKHSLDSQ). Residues 60–87 (EVEIVWTVMPAIVLITIALPSLRILYLT) traverse the membrane as a helical segment. Residues 88–229 (DEISNPHLTI…ENWTTKVLAS (142 aa)) are Mitochondrial intermembrane-facing. Cu cation-binding residues include histidine 161, cysteine 196, glutamate 198, cysteine 200, histidine 204, and methionine 207. Glutamate 198 is a binding site for Mg(2+).

This sequence belongs to the cytochrome c oxidase subunit 2 family. In terms of assembly, component of the cytochrome c oxidase (complex IV, CIV), a multisubunit enzyme composed of 14 subunits. The complex is composed of a catalytic core of 3 subunits MT-CO1, MT-CO2 and MT-CO3, encoded in the mitochondrial DNA, and 11 supernumerary subunits COX4I, COX5A, COX5B, COX6A, COX6B, COX6C, COX7A, COX7B, COX7C, COX8 and NDUFA4, which are encoded in the nuclear genome. The complex exists as a monomer or a dimer and forms supercomplexes (SCs) in the inner mitochondrial membrane with NADH-ubiquinone oxidoreductase (complex I, CI) and ubiquinol-cytochrome c oxidoreductase (cytochrome b-c1 complex, complex III, CIII), resulting in different assemblies (supercomplex SCI(1)III(2)IV(1) and megacomplex MCI(2)III(2)IV(2)). Found in a complex with TMEM177, COA6, COX18, COX20, SCO1 and SCO2. Interacts with TMEM177 in a COX20-dependent manner. Interacts with COX20. Interacts with COX16. Cu cation is required as a cofactor.

The protein resides in the mitochondrion inner membrane. It catalyses the reaction 4 Fe(II)-[cytochrome c] + O2 + 8 H(+)(in) = 4 Fe(III)-[cytochrome c] + 2 H2O + 4 H(+)(out). Functionally, component of the cytochrome c oxidase, the last enzyme in the mitochondrial electron transport chain which drives oxidative phosphorylation. The respiratory chain contains 3 multisubunit complexes succinate dehydrogenase (complex II, CII), ubiquinol-cytochrome c oxidoreductase (cytochrome b-c1 complex, complex III, CIII) and cytochrome c oxidase (complex IV, CIV), that cooperate to transfer electrons derived from NADH and succinate to molecular oxygen, creating an electrochemical gradient over the inner membrane that drives transmembrane transport and the ATP synthase. Cytochrome c oxidase is the component of the respiratory chain that catalyzes the reduction of oxygen to water. Electrons originating from reduced cytochrome c in the intermembrane space (IMS) are transferred via the dinuclear copper A center (CU(A)) of subunit 2 and heme A of subunit 1 to the active site in subunit 1, a binuclear center (BNC) formed by heme A3 and copper B (CU(B)). The BNC reduces molecular oxygen to 2 water molecules using 4 electrons from cytochrome c in the IMS and 4 protons from the mitochondrial matrix. This is Cytochrome c oxidase subunit 2 (MT-CO2) from Petromyzon marinus (Sea lamprey).